Reading from the N-terminus, the 152-residue chain is Histone deacetylase complex subunit SAP18 (152 aa).

Residues M1 to T38 are disordered. Over residues P28–T38 the composition is skewed to basic and acidic residues.

This sequence belongs to the SAP18 family. As to quaternary structure, interacts with SIN3, ERF3, ERF4 and HDA19. As to expression, ubiquitous, with low level in flowers.

Links the histone deacetylase complex to transcriptional repressors bound to chromatin. Involved in the tethering of the SIN3 complex to core histone proteins. In Arabidopsis thaliana (Mouse-ear cress), this protein is Histone deacetylase complex subunit SAP18.